We begin with the raw amino-acid sequence, 413 residues long: Phosphopentomutase (413 aa).

Mn(2+) is bound by residues Asp-11, Asp-306, His-311, Asp-347, His-348, and His-359.

Belongs to the phosphopentomutase family. Mn(2+) is required as a cofactor.

It is found in the cytoplasm. The catalysed reaction is 2-deoxy-alpha-D-ribose 1-phosphate = 2-deoxy-D-ribose 5-phosphate. It carries out the reaction alpha-D-ribose 1-phosphate = D-ribose 5-phosphate. It participates in carbohydrate degradation; 2-deoxy-D-ribose 1-phosphate degradation; D-glyceraldehyde 3-phosphate and acetaldehyde from 2-deoxy-alpha-D-ribose 1-phosphate: step 1/2. In terms of biological role, isomerase that catalyzes the conversion of deoxy-ribose 1-phosphate (dRib-1-P) and ribose 1-phosphate (Rib-1-P) to deoxy-ribose 5-phosphate (dRib-5-P) and ribose 5-phosphate (Rib-5-P), respectively. The chain is Phosphopentomutase from Helicobacter pylori (strain P12).